A 291-amino-acid polypeptide reads, in one-letter code: Cell division control protein 2 homolog 1 (291 aa).

Positions 1 to 284 (GENVEKIGEG…ARSAVEHEYF (284 aa)) constitute a Protein kinase domain. Residues 7–15 (IGEGTYGVV) and Lys30 each bind ATP. Residue Thr11 is modified to Phosphothreonine. Position 12 is a phosphotyrosine (Tyr12). The Proton acceptor role is filled by Asp124. Thr158 bears the Phosphothreonine; by CAK mark.

Belongs to the protein kinase superfamily. CMGC Ser/Thr protein kinase family. CDC2/CDKX subfamily. Found in most organs including root, young leaf, stem, vegetative meristem and flower bud.

It carries out the reaction L-seryl-[protein] + ATP = O-phospho-L-seryl-[protein] + ADP + H(+). The enzyme catalyses L-threonyl-[protein] + ATP = O-phospho-L-threonyl-[protein] + ADP + H(+). The catalysed reaction is [DNA-directed RNA polymerase] + ATP = phospho-[DNA-directed RNA polymerase] + ADP + H(+). Phosphorylation at Thr-11 or Tyr-12 inactivates the enzyme, while phosphorylation at Thr-158 activates it. Its function is as follows. Plays a key role in the control of the eukaryotic cell cycle. Component of the kinase complex that phosphorylates the repetitive C-terminus of RNA polymerase II. The polypeptide is Cell division control protein 2 homolog 1 (CDC2A) (Medicago sativa (Alfalfa)).